The primary structure comprises 467 residues: Cysteine--tRNA ligase (467 aa).

C29 contacts Zn(2+). The 'HIGH' region motif lies at 31-41; the sequence is PTVYNYIHIGN. Residues C209, H234, and E238 each contribute to the Zn(2+) site. Residues 266–270 carry the 'KMSKS' region motif; that stretch reads KMSKS. Residue K269 coordinates ATP. A Phosphoserine modification is found at S270.

It belongs to the class-I aminoacyl-tRNA synthetase family. As to quaternary structure, monomer. Zn(2+) serves as cofactor.

The protein resides in the cytoplasm. The enzyme catalyses tRNA(Cys) + L-cysteine + ATP = L-cysteinyl-tRNA(Cys) + AMP + diphosphate. The protein is Cysteine--tRNA ligase of Bacillus licheniformis (strain ATCC 14580 / DSM 13 / JCM 2505 / CCUG 7422 / NBRC 12200 / NCIMB 9375 / NCTC 10341 / NRRL NRS-1264 / Gibson 46).